Consider the following 250-residue polypeptide: Small ribosomal subunit protein uS2 (250 aa).

Belongs to the universal ribosomal protein uS2 family.

In Acidovorax sp. (strain JS42), this protein is Small ribosomal subunit protein uS2.